The primary structure comprises 400 residues: MATGGGAEEESQRGRPQLPLPARPVARVEEPEGVREKMGWAQVVKNLAEKKGDFREPRRRDETGSGASGGLGSPGGLATPNPGDFPPAARGDPKGRRRDPTGEASDAYRKKSASGAGDPSRRKKAEVTAAMATPARPGTTEDATERPLQDEPPAAGPGKGRFLVRICFQGDESACPTRDFVVGALILRSIGMDPDDIYAVIQIPGSREFDVSFRSAEKLALFLRVYEEKRELEDCWENFVVLGRSRSSLKTLFILFRNETVDVEDIVTWLKRHCDVLAVPVKVTDRFGIWTGEYKCEIELRQGEGGVRHLPGAFFLGAERGYSWYKGQPKTCFKCGSRTHMSGTCTQDRCFRCGEEGHLSPYCRKVIVCNLCGKRGHAFAQCPKAVHNSVTAQLTSVAGH.

Positions 1–157 are disordered; it reads MATGGGAEEE…LQDEPPAAGP (157 aa). Composition is skewed to basic and acidic residues over residues 26–38 and 47–63; these read ARVEEPEGVREKM and LAEKKGDFREPRRRDET. The segment covering 66–75 has biased composition (gly residues); that stretch reads GASGGLGSPG. Residues 91–109 are compositionally biased toward basic and acidic residues; it reads GDPKGRRRDPTGEASDAYR. Position 198 is a phosphotyrosine (tyrosine 198). 2 CCHC-type zinc fingers span residues 349–365 and 369–384; these read RCFRCGEEGHLSPYCRK and CNLCGKRGHAFAQCPK.

Interacts with CGAS. Interacts with RIGI. Interacts with IFIH1/MDA5.

The protein localises to the cytoplasm. Functionally, nucleic acid-binding protein involved in innate immune response to DNA and RNA viruses. Binds DNA and RNA in the cytoplasm and acts by promoting recognition of viral nucleic acids by virus sensors, such as RIGI, IFIH1/MDA5 and CGAS. Acts as a co-sensor for recognition of double-stranded DNA (dsDNA) by cGAS in the cytoplasm, thereby playing a role in innate immune response to cytosolic dsDNA and DNA virus. Binds dsDNA and probably acts by promoting sensing of dsDNA by CGAS, leading to enhance CGAS oligomerization and activation. Promotes sensing of viral RNA by RIG-I-like receptors proteins RIGI and IFIH1/MDA5 via two mechanisms: binds double-stranded RNA (dsRNA), enhancing the binding of RIGI and IFIH1/MDA5 to dsRNA and promotes 'Lys-63'-linked ubiquitination and subsequent activation of RIGI and IFIH1/MDA5. The polypeptide is Zinc finger CCHC domain-containing protein 3 (Mus musculus (Mouse)).